Consider the following 449-residue polypeptide: tRNA(Ile)-lysidine synthase (449 aa).

35 to 40 (SGGIDS) is a binding site for ATP.

This sequence belongs to the tRNA(Ile)-lysidine synthase family.

It is found in the cytoplasm. The catalysed reaction is cytidine(34) in tRNA(Ile2) + L-lysine + ATP = lysidine(34) in tRNA(Ile2) + AMP + diphosphate + H(+). Functionally, ligates lysine onto the cytidine present at position 34 of the AUA codon-specific tRNA(Ile) that contains the anticodon CAU, in an ATP-dependent manner. Cytidine is converted to lysidine, thus changing the amino acid specificity of the tRNA from methionine to isoleucine. The sequence is that of tRNA(Ile)-lysidine synthase from Coxiella burnetii (strain RSA 493 / Nine Mile phase I).